The sequence spans 672 residues: Inner kinetochore subunit mis6 (672 aa).

Belongs to the CENP-I/CTF3 family. In terms of assembly, component of the inner kinetochore constitutive centromere-associated network (CCAN) (also known as central kinetochore Sim4 complex in fission yeast), which is composed of at least cnl2, cnp3, cnp20, fta1, fta2, fta3, fta4, fta6, fta7, mal2, mhf1, mhf2, mis6, mis15, mis17, sim4 and wip1. Interacts with cnp1, sim4, mis15 and mis17.

The protein resides in the nucleus. Its subcellular location is the chromosome. It localises to the centromere. Functionally, component of the kinetochore, a multiprotein complex that assembles on centromeric DNA and attaches chromosomes to spindle microtubules, mediating chromosome segregation and sister chromatid segregation during meiosis and mitosis. Component of the inner kinetochore constitutive centromere-associated network (CCAN), which serves as a structural platform for outer kinetochore assembly. Required for the localization of cnp1 to the centromere. This is Inner kinetochore subunit mis6 (mis6) from Schizosaccharomyces pombe (strain 972 / ATCC 24843) (Fission yeast).